A 336-amino-acid polypeptide reads, in one-letter code: Dihydroorotate dehydrogenase (quinone) (336 aa).

FMN contacts are provided by residues 62-66 and threonine 86; that span reads AGLDK. Lysine 66 provides a ligand contact to substrate. Substrate is bound at residue 111–115; it reads NRMGF. Asparagine 139 and asparagine 172 together coordinate FMN. Position 172 (asparagine 172) interacts with substrate. Serine 175 serves as the catalytic Nucleophile. A substrate-binding site is contributed by asparagine 177. Positions 217 and 245 each coordinate FMN. 246–247 is a binding site for substrate; the sequence is NT. FMN-binding positions include glycine 268, glycine 297, and 318–319; that span reads FS.

It belongs to the dihydroorotate dehydrogenase family. Type 2 subfamily. Monomer. FMN is required as a cofactor.

The protein resides in the cell membrane. The catalysed reaction is (S)-dihydroorotate + a quinone = orotate + a quinol. It functions in the pathway pyrimidine metabolism; UMP biosynthesis via de novo pathway; orotate from (S)-dihydroorotate (quinone route): step 1/1. Catalyzes the conversion of dihydroorotate to orotate with quinone as electron acceptor. The protein is Dihydroorotate dehydrogenase (quinone) of Photorhabdus laumondii subsp. laumondii (strain DSM 15139 / CIP 105565 / TT01) (Photorhabdus luminescens subsp. laumondii).